Here is a 739-residue protein sequence, read N- to C-terminus: Polyribonucleotide nucleotidyltransferase (739 aa).

The Mg(2+) site is built by Asp-489 and Asp-495. In terms of domain architecture, KH spans 556–615 (PKIDTIKIDVDKIKIVIGKGGETIDKIIAETGVKIDIDEDGLVAIFSPDRAAIERTKEII). The 69-residue stretch at 625–693 (DEVFQAKVVR…DKGRIDASMK (69 aa)) folds into the S1 motif domain. The tract at residues 699 to 739 (PEGYVEPEKRERSEKPRRHKEHKEKKDNNFGEFKFHKVDKK) is disordered. The segment covering 722 to 739 (EKKDNNFGEFKFHKVDKK) has biased composition (basic and acidic residues).

It belongs to the polyribonucleotide nucleotidyltransferase family. It depends on Mg(2+) as a cofactor.

The protein localises to the cytoplasm. It carries out the reaction RNA(n+1) + phosphate = RNA(n) + a ribonucleoside 5'-diphosphate. Involved in mRNA degradation. Catalyzes the phosphorolysis of single-stranded polyribonucleotides processively in the 3'- to 5'-direction. The protein is Polyribonucleotide nucleotidyltransferase of Streptococcus suis (strain 98HAH33).